A 132-amino-acid chain; its full sequence is Large-conductance mechanosensitive channel (132 aa).

A run of 2 helical transmembrane segments spans residues 11 to 31 and 75 to 95; these read FISR…GAFG and GSFL…FLLV.

Belongs to the MscL family. As to quaternary structure, homopentamer.

The protein resides in the cell inner membrane. Its function is as follows. Channel that opens in response to stretch forces in the membrane lipid bilayer. May participate in the regulation of osmotic pressure changes within the cell. This Synechococcus sp. (strain JA-2-3B'a(2-13)) (Cyanobacteria bacterium Yellowstone B-Prime) protein is Large-conductance mechanosensitive channel.